The following is a 99-amino-acid chain: MALTKAEMSEYLFDKLGLSKRDAKELVELFFEEIRRALENGEQVKLSGFGNFDLRDKNQRPGRNPKTGEDIPITARRVVTFRPGQKLKSRVENAAPKEE.

The segment at 49–75 (FGNFDLRDKNQRPGRNPKTGEDIPITA) is disordered.

This sequence belongs to the bacterial histone-like protein family. In terms of assembly, heterodimer of an alpha and a beta chain.

In terms of biological role, this protein is one of the two subunits of integration host factor, a specific DNA-binding protein that functions in genetic recombination as well as in transcriptional and translational control. The chain is Integration host factor subunit alpha from Salmonella arizonae (strain ATCC BAA-731 / CDC346-86 / RSK2980).